Here is a 157-residue protein sequence, read N- to C-terminus: Endoribonuclease YbeY (157 aa).

Zn(2+)-binding residues include H114, H118, and H124.

This sequence belongs to the endoribonuclease YbeY family. Zn(2+) is required as a cofactor.

The protein localises to the cytoplasm. Single strand-specific metallo-endoribonuclease involved in late-stage 70S ribosome quality control and in maturation of the 3' terminus of the 16S rRNA. The sequence is that of Endoribonuclease YbeY from Edwardsiella ictaluri (strain 93-146).